The sequence spans 249 residues: Derlin-2.1 (249 aa).

Residues 1-21 (MAQAVEEWYRQMPIITRSYLT) lie on the Cytoplasmic side of the membrane. A helical membrane pass occupies residues 22–42 (AAVVTTVGCTLEIISPYHLYL). Residues 43-96 (NPKLVVQHYEIWRLVTNFLYFRKMDLDFLFHMFFLARYCKLLEENSFRGRTADF) are Lumenal-facing. Residues 97-117 (FYMLLFGATVLTSIVLIGGMI) traverse the membrane as a helical segment. At 118 to 122 (PYISE) the chain is on the cytoplasmic side. Residues 123 to 143 (TFARILFLSNSLTFMMVYVWS) form a helical membrane-spanning segment. Over 144–152 (KHNPFIHMS) the chain is Lumenal. The chain crosses the membrane as a helical span at residues 153–173 (FLGLFTFTAAYLPWVLLGFSI). The Cytoplasmic segment spans residues 174–249 (LVGSSTWVDL…GAMGLDPQAQ (76 aa)).

Belongs to the derlin family. In terms of tissue distribution, expressed in roots, stalks, leaves, embryo and endosperm.

Its subcellular location is the endoplasmic reticulum membrane. Its function is as follows. May be involved in the degradation process of specific misfolded endoplasmic reticulum (ER) luminal proteins. The chain is Derlin-2.1 (DER2.1) from Zea mays (Maize).